Consider the following 490-residue polypeptide: Probable cytosol aminopeptidase (490 aa).

Residues Lys257 and Asp262 each coordinate Mn(2+). The active site involves Lys269. Residues Asp281, Asp341, and Glu343 each contribute to the Mn(2+) site. Residue Arg345 is part of the active site.

The protein belongs to the peptidase M17 family. Mn(2+) is required as a cofactor.

It is found in the cytoplasm. The catalysed reaction is Release of an N-terminal amino acid, Xaa-|-Yaa-, in which Xaa is preferably Leu, but may be other amino acids including Pro although not Arg or Lys, and Yaa may be Pro. Amino acid amides and methyl esters are also readily hydrolyzed, but rates on arylamides are exceedingly low.. It catalyses the reaction Release of an N-terminal amino acid, preferentially leucine, but not glutamic or aspartic acids.. In terms of biological role, presumably involved in the processing and regular turnover of intracellular proteins. Catalyzes the removal of unsubstituted N-terminal amino acids from various peptides. The chain is Probable cytosol aminopeptidase from Prochlorococcus marinus (strain MIT 9312).